The sequence spans 342 residues: Anthranilate phosphoribosyltransferase (342 aa).

5-phospho-alpha-D-ribose 1-diphosphate-binding positions include Gly79, 82 to 83 (GD), Thr87, 89 to 92 (NIST), 107 to 115 (KHCNQRISS), and Ser119. Gly79 serves as a coordination point for anthranilate. Ser91 serves as a coordination point for Mg(2+). Residue Asn110 participates in anthranilate binding. Arg165 lines the anthranilate pocket. Positions 223 and 224 each coordinate Mg(2+).

Belongs to the anthranilate phosphoribosyltransferase family. Homodimer. It depends on Mg(2+) as a cofactor.

The catalysed reaction is N-(5-phospho-beta-D-ribosyl)anthranilate + diphosphate = 5-phospho-alpha-D-ribose 1-diphosphate + anthranilate. It participates in amino-acid biosynthesis; L-tryptophan biosynthesis; L-tryptophan from chorismate: step 2/5. Functionally, catalyzes the transfer of the phosphoribosyl group of 5-phosphorylribose-1-pyrophosphate (PRPP) to anthranilate to yield N-(5'-phosphoribosyl)-anthranilate (PRA). The chain is Anthranilate phosphoribosyltransferase from Buchnera aphidicola subsp. Acyrthosiphon pisum (strain 5A).